A 548-amino-acid polypeptide reads, in one-letter code: Synaptic vesicle 2-related protein (548 aa).

The Cytoplasmic segment spans residues 1–87 (MEDDLFQLRH…GFGKFQWKLS (87 aa)). Residues 88–108 (MLTGLAWMADAMEMMILSILA) form a helical membrane-spanning segment. Over 109–119 (PQLHCEWRLPS) the chain is Vesicular. A helical transmembrane segment spans residues 120 to 140 (WQVALLTSVVFIGMMASSSLW). The Cytoplasmic segment spans residues 141–156 (GNVSDQYGRRTGLKIS). The helical transmembrane segment at 157-177 (VIWTLYYGILSAFAPVYSWIL) threads the bilayer. The Vesicular segment spans residues 178 to 180 (VLR). The chain crosses the membrane as a helical span at residues 181-201 (GLVGFGIGGVPQSVTLYAEFL). At 202–209 (PMKSRAKC) the chain is on the cytoplasmic side. The helical transmembrane segment at 210 to 230 (ILLIEIFWALGTVFEVLLAIF) threads the bilayer. The Vesicular segment spans residues 231 to 238 (VMPTLGWR). The helical transmembrane segment at 239 to 259 (WLLILSALPLMLFAILCFWLP) threads the bilayer. Residues 260 to 316 (ESARYEVLSGNQEKALATLKRIATENGAPMPLGKLIVSRQEDRGKIRDLFSPQFRCT) are Cytoplasmic-facing. Residues 317 to 337 (TLLLWFIWFSNAFSYYGLVLL) traverse the membrane as a helical segment. Residues 338 to 373 (TTELFQAGDVCSISNQRKAVKPKCSLACEYLTVEDY) are Vesicular-facing. A helical membrane pass occupies residues 374–394 (TDLLWTTLSEFPGLLVTLWII). Topologically, residues 395 to 401 (DRVGRKK) are cytoplasmic. Residues 402-422 (TMAICFIIFSFSALLLFLCVG) form a helical membrane-spanning segment. Residues 423–424 (RN) are Vesicular-facing. The helical transmembrane segment at 425-445 (VLTVFLFIARAFISGGFQAAY) threads the bilayer. At 446 to 457 (VYTPEVYPTATR) the chain is on the cytoplasmic side. A helical transmembrane segment spans residues 458 to 478 (ALGLGTCSGMARVGALITPFI). The Vesicular portion of the chain corresponds to 479 to 486 (AQVMLESS). A helical membrane pass occupies residues 487–507 (IYLTVLVYSGCCVLAAVASCF). Residues 508–548 (LPIETKGRGLQESSHREWGQEMVGRGTHNVGATPSHSGSQE) lie on the Cytoplasmic side of the membrane. A disordered region spans residues 519 to 548 (ESSHREWGQEMVGRGTHNVGATPSHSGSQE). A compositionally biased stretch (polar residues) spans 537–548 (VGATPSHSGSQE).

Belongs to the major facilitator superfamily. Detected in embryonic trigeminal ganglion and spinal cord.

It is found in the cytoplasmic vesicle. The protein localises to the secretory vesicle. Its subcellular location is the synaptic vesicle membrane. The sequence is that of Synaptic vesicle 2-related protein (svop) from Xenopus laevis (African clawed frog).